The following is a 282-amino-acid chain: Bifunctional protein FolD (282 aa).

NADP(+) is bound by residues 167–169 (GRS) and Ser192.

It belongs to the tetrahydrofolate dehydrogenase/cyclohydrolase family. Homodimer.

The enzyme catalyses (6R)-5,10-methylene-5,6,7,8-tetrahydrofolate + NADP(+) = (6R)-5,10-methenyltetrahydrofolate + NADPH. It carries out the reaction (6R)-5,10-methenyltetrahydrofolate + H2O = (6R)-10-formyltetrahydrofolate + H(+). Its pathway is one-carbon metabolism; tetrahydrofolate interconversion. Catalyzes the oxidation of 5,10-methylenetetrahydrofolate to 5,10-methenyltetrahydrofolate and then the hydrolysis of 5,10-methenyltetrahydrofolate to 10-formyltetrahydrofolate. In Acidobacterium capsulatum (strain ATCC 51196 / DSM 11244 / BCRC 80197 / JCM 7670 / NBRC 15755 / NCIMB 13165 / 161), this protein is Bifunctional protein FolD.